Here is a 145-residue protein sequence, read N- to C-terminus: uncharacterized protein (145 aa).

This is an uncharacterized protein from Sinorhizobium fredii (strain NBRC 101917 / NGR234).